A 625-amino-acid chain; its full sequence is Glutamyl-tRNA(Gln) amidotransferase subunit E (625 aa).

Belongs to the GatB/GatE family. GatE subfamily. In terms of assembly, heterodimer of GatD and GatE.

The enzyme catalyses L-glutamyl-tRNA(Gln) + L-glutamine + ATP + H2O = L-glutaminyl-tRNA(Gln) + L-glutamate + ADP + phosphate + H(+). Its function is as follows. Allows the formation of correctly charged Gln-tRNA(Gln) through the transamidation of misacylated Glu-tRNA(Gln) in organisms which lack glutaminyl-tRNA synthetase. The reaction takes place in the presence of glutamine and ATP through an activated gamma-phospho-Glu-tRNA(Gln). The GatDE system is specific for glutamate and does not act on aspartate. The sequence is that of Glutamyl-tRNA(Gln) amidotransferase subunit E from Caldivirga maquilingensis (strain ATCC 700844 / DSM 13496 / JCM 10307 / IC-167).